The chain runs to 267 residues: Glucosamine-6-phosphate deaminase (267 aa).

D72 serves as the catalytic Proton acceptor; for enolization step. The active-site For ring-opening step is the D141. H143 acts as the Proton acceptor; for ring-opening step in catalysis. The active-site For ring-opening step is the E148.

This sequence belongs to the glucosamine/galactosamine-6-phosphate isomerase family. NagB subfamily. In terms of assembly, homohexamer.

It catalyses the reaction alpha-D-glucosamine 6-phosphate + H2O = beta-D-fructose 6-phosphate + NH4(+). The protein operates within amino-sugar metabolism; N-acetylneuraminate degradation; D-fructose 6-phosphate from N-acetylneuraminate: step 5/5. Its activity is regulated as follows. Allosterically activated by N-acetylglucosamine 6-phosphate (GlcNAc6P). Its function is as follows. Catalyzes the reversible isomerization-deamination of glucosamine 6-phosphate (GlcN6P) to form fructose 6-phosphate (Fru6P) and ammonium ion. This is Glucosamine-6-phosphate deaminase from Actinobacillus pleuropneumoniae serotype 3 (strain JL03).